We begin with the raw amino-acid sequence, 2254 residues long: Acetyl-CoA carboxylase 1 (2254 aa).

Positions 36 to 543 (PIHSILIANN…HTGWLDSRIA (508 aa)) constitute a Biotin carboxylation domain. The 193-residue stretch at 189–381 (NSNLVTIPEE…LPAAQVAVGM (193 aa)) folds into the ATP-grasp domain. 215–272 (CQVVGYPAMIKASWGGGGKGIRKVHNDDEVRALFKQVQGEVPGSPIFIMKVASQSRHL) contributes to the ATP binding site. Positions 338, 352, and 354 each coordinate Mg(2+). The Mn(2+) site is built by E338, E352, and N354. R356 is an active-site residue. One can recognise a Biotinyl-binding domain in the interval 670-744 (LQNDHDPSKL…QAGELIANLD (75 aa)). K711 carries the N6-biotinyllysine modification. T1031 carries the phosphothreonine modification. S1192 is subject to Phosphoserine. In terms of domain architecture, CoA carboxyltransferase N-terminal spans 1492-1831 (QYKPLGYLDR…YVGGPLPVLA (340 aa)). The segment at 1492–2150 (QYKPLGYLDR…ESSLVKNVRE (659 aa)) is carboxyltransferase. Residues R1740, K2041, and R2043 each coordinate CoA. One can recognise a CoA carboxyltransferase C-terminal domain in the interval 1835–2150 (PPERIVEYVP…ESSLVKNVRE (316 aa)).

Homodimer. The cofactor is biotin. Mg(2+) is required as a cofactor. Requires Mn(2+) as cofactor. Expressed in roots, trichomes, epidermal leaf cells, siliques, petals, anthers, and seeds.

It is found in the cytoplasm. The protein resides in the cytosol. The enzyme catalyses hydrogencarbonate + acetyl-CoA + ATP = malonyl-CoA + ADP + phosphate + H(+). The catalysed reaction is N(6)-biotinyl-L-lysyl-[protein] + hydrogencarbonate + ATP = N(6)-carboxybiotinyl-L-lysyl-[protein] + ADP + phosphate + H(+). The protein operates within lipid metabolism; malonyl-CoA biosynthesis; malonyl-CoA from acetyl-CoA: step 1/1. Functionally, multifunctional enzyme that catalyzes the carboxylation of acetyl-CoA, forming malonyl-CoA, which is used in the plastid for fatty acid synthesis and in the cytosol in various biosynthetic pathways including fatty acid elongation. Required for very long chain fatty acids elongation. Necessary for embryo and plant development. Plays a central function in embryo morphogenesis, especially in apical meristem development. Involved in cell proliferation and tissue patterning. May act as a repressor of cytokinin response. The protein is Acetyl-CoA carboxylase 1 (ACC1) of Arabidopsis thaliana (Mouse-ear cress).